The following is a 50-amino-acid chain: Alpha-conotoxin CnIG (50 aa).

A signal peptide spans Leu-1 to Ser-7. A compositionally biased stretch (polar residues) spans Leu-1 to Ala-13. Positions Leu-1 to Ser-26 are disordered. The propeptide occupies Phe-8–Gly-35. The span at Ser-14–Ser-26 shows a compositional bias: basic and acidic residues. 2 disulfides stabilise this stretch: Cys-37/Cys-42 and Cys-38/Cys-48. Position 48 is a cysteine amide (Cys-48).

This sequence belongs to the conotoxin A superfamily. Expressed by the venom duct.

The protein localises to the secreted. The polypeptide is Alpha-conotoxin CnIG (Conus consors (Singed cone)).